The primary structure comprises 122 residues: Large ribosomal subunit protein eL34 (122 aa).

This sequence belongs to the eukaryotic ribosomal protein eL34 family.

The polypeptide is Large ribosomal subunit protein eL34 (rpl34) (Dictyostelium discoideum (Social amoeba)).